The primary structure comprises 467 residues: Ribulose bisphosphate carboxylase large chain (467 aa).

Residues Xaa106 and Thr156 each coordinate substrate. The active-site Proton acceptor is the Lys158. Substrate is bound at residue Lys160. 3 residues coordinate Mg(2+): Lys184, Asp186, and Glu187. Lys184 carries the post-translational modification N6-carboxylysine. The Proton acceptor role is filled by His276. 3 residues coordinate substrate: Arg277, His309, and Ser361.

It belongs to the RuBisCO large chain family. Type I subfamily. Heterohexadecamer of 8 large chains and 8 small chains. It depends on Mg(2+) as a cofactor.

The protein localises to the plastid. The protein resides in the chloroplast. It carries out the reaction 2 (2R)-3-phosphoglycerate + 2 H(+) = D-ribulose 1,5-bisphosphate + CO2 + H2O. The catalysed reaction is D-ribulose 1,5-bisphosphate + O2 = 2-phosphoglycolate + (2R)-3-phosphoglycerate + 2 H(+). In terms of biological role, ruBisCO catalyzes two reactions: the carboxylation of D-ribulose 1,5-bisphosphate, the primary event in carbon dioxide fixation, as well as the oxidative fragmentation of the pentose substrate in the photorespiration process. Both reactions occur simultaneously and in competition at the same active site. This Chondrus crispus (Carrageen Irish moss) protein is Ribulose bisphosphate carboxylase large chain (rbcL).